A 274-amino-acid polypeptide reads, in one-letter code: MRSYGKEKKLVFPYVFIACCFFLAIFGFCFFNLFSQGISFSEIPTTRRSVNDETDSLDHGSSVSNIPFHGLSWNPRVFYLPNFATKQQCEAVIDMAKPKLKPSTLALRKGETAETTQNYRSLHQHTDEDESGVLAAIEEKIALATRFPKDYYESFNILRYQLGQKYDSHYDAFHSAEYGPLISQRVVTFLLFLSSVEEGGETMFPFENGRNMNGRYDYEKCVGLKVKPRQGDAIFFYNLFPNGTIDQTSLHGSCPVIKGEKWVATKWIRDQTYD.

The Cytoplasmic segment spans residues 1-10; it reads MRSYGKEKKL. A helical; Signal-anchor for type II membrane protein membrane pass occupies residues 11-31; it reads VFPYVFIACCFFLAIFGFCFF. Residues 32-274 lie on the Lumenal side of the membrane; it reads NLFSQGISFS…TKWIRDQTYD (243 aa). The 120-residue stretch at 151–270 folds into the Fe2OG dioxygenase domain; it reads YYESFNILRY…KWVATKWIRD (120 aa). Fe cation is bound by residues His-169 and Asp-171. N-linked (GlcNAc...) asparagine glycosylation occurs at Asn-242. His-251 contributes to the Fe cation binding site. Lys-261 contacts 2-oxoglutarate.

It belongs to the P4HA family. Requires Fe(2+) as cofactor. It depends on L-ascorbate as a cofactor. As to expression, expressed in epidermal root hair cells (trichoblasts) root hairless cells (atrichoblasts).

The protein localises to the endoplasmic reticulum membrane. It catalyses the reaction L-prolyl-[collagen] + 2-oxoglutarate + O2 = trans-4-hydroxy-L-prolyl-[collagen] + succinate + CO2. Its function is as follows. Catalyzes the post-translational formation of 4-hydroxyproline in -Xaa-Pro-Gly- sequences in proline-rich peptide sequences of plant glycoproteins and other proteins. Hydroxyprolines are important constituent of many plant cell wall glycoproteins such as extensins, hydroxyproline-rich glycoproteins, lectins and arabinogalactan proteins. Possesses high affinity for leucine-rich repeat and proline-rich extensins of root cell walls that are essential for root hair development. Hydroxyprolines define the subsequent O-glycosylation sites by arabinosyltransferases which elongate the O-arabinosides on extensins. The polypeptide is Prolyl 4-hydroxylase 13 (Arabidopsis thaliana (Mouse-ear cress)).